We begin with the raw amino-acid sequence, 318 residues long: Ankyrin repeat and SOCS box protein 7 (318 aa).

7 ANK repeats span residues 13–42, 46–75, 80–109, 116–145, 149–178, 180–208, and 213–242; these read QEESQIQAAVAAGDVHTVRKMLEQGYSPNG, NGWTLLHFSAARGKERCVRVFLEHGADPTV, GGFTALHYAAMHGRARIARLMLESEYRSDI, DGWTPLHVAAHYGRDSFVRLLLEFKAEVDP, KGTTPLQLAIIRERSSCVKILLDHNANIDI, NGFLLRYAVIKSNHSYCRMFLQRGADTNL, and DGQTPLHLSALRDDVLCARMLYNYGADTNT. Residues 265–318 enclose the SOCS box domain; sequence LDFLQEVTRQPRNLQDLCRIKIRQCIGLQNLKLLDELPIAKVMKDYLKHKSDDI.

The protein belongs to the ankyrin SOCS box (ASB) family. Interacts with CUL5. Interacts with RNF7. Interacts with PSRC1.

Its pathway is protein modification; protein ubiquitination. In terms of biological role, probable substrate-recognition component of a SCF-like ECS (Elongin-Cullin-SOCS-box protein) E3 ubiquitin-protein ligase complex which mediates the ubiquitination and subsequent proteasomal degradation of target proteins. Plays a role in spindle dynamics and genome integrity by targeting the mitotic progression protein PSRC1 for proteasomal degradation in a cell cycle-dependent manner. Also participates in meiosis by mediating the proper attachment between kinetochores and microtubules. This Pongo abelii (Sumatran orangutan) protein is Ankyrin repeat and SOCS box protein 7 (ASB7).